Reading from the N-terminus, the 154-residue chain is Large ribosomal subunit protein uL30 (154 aa).

The tract at residues 114 to 139 (PVLRLHPPRGGHRGQKHPTAEGGQIG) is disordered. The segment covering 119–129 (HPPRGGHRGQK) has biased composition (basic residues).

Belongs to the universal ribosomal protein uL30 family. In terms of assembly, part of the 50S ribosomal subunit.

This is Large ribosomal subunit protein uL30 from Haloquadratum walsbyi (strain DSM 16790 / HBSQ001).